The chain runs to 226 residues: 2-C-methyl-D-erythritol 4-phosphate cytidylyltransferase (226 aa).

It belongs to the IspD/TarI cytidylyltransferase family. IspD subfamily.

The catalysed reaction is 2-C-methyl-D-erythritol 4-phosphate + CTP + H(+) = 4-CDP-2-C-methyl-D-erythritol + diphosphate. The protein operates within isoprenoid biosynthesis; isopentenyl diphosphate biosynthesis via DXP pathway; isopentenyl diphosphate from 1-deoxy-D-xylulose 5-phosphate: step 2/6. Catalyzes the formation of 4-diphosphocytidyl-2-C-methyl-D-erythritol from CTP and 2-C-methyl-D-erythritol 4-phosphate (MEP). The polypeptide is 2-C-methyl-D-erythritol 4-phosphate cytidylyltransferase (Parasynechococcus marenigrum (strain WH8102)).